The sequence spans 38 residues: Large ribosomal subunit protein bL36 (38 aa).

It belongs to the bacterial ribosomal protein bL36 family.

In Psychrobacter arcticus (strain DSM 17307 / VKM B-2377 / 273-4), this protein is Large ribosomal subunit protein bL36.